The following is a 39-amino-acid chain: Photosystem II reaction center protein L (39 aa).

The helical transmembrane segment at 18–38 (SLYLGLLFVFVTGVLMSSYFF) threads the bilayer.

This sequence belongs to the PsbL family. As to quaternary structure, PSII is composed of 1 copy each of membrane proteins PsbA, PsbB, PsbC, PsbD, PsbE, PsbF, PsbH, PsbI, PsbJ, PsbK, PsbL, PsbM, PsbT, PsbX, PsbY, PsbZ, Psb30/Ycf12, peripheral proteins PsbO, CyanoQ (PsbQ), PsbU, PsbV and a large number of cofactors. It forms dimeric complexes.

Its subcellular location is the cellular thylakoid membrane. Functionally, one of the components of the core complex of photosystem II (PSII). PSII is a light-driven water:plastoquinone oxidoreductase that uses light energy to abstract electrons from H(2)O, generating O(2) and a proton gradient subsequently used for ATP formation. It consists of a core antenna complex that captures photons, and an electron transfer chain that converts photonic excitation into a charge separation. This subunit is found at the monomer-monomer interface and is required for correct PSII assembly and/or dimerization. The sequence is that of Photosystem II reaction center protein L from Synechococcus sp. (strain CC9605).